The chain runs to 407 residues: Na(+)-translocating NADH-quinone reductase subunit F (407 aa).

The helical transmembrane segment at 6–26 (IFLAIGMFTAIVLGLVAIILV) threads the bilayer. The 2Fe-2S ferredoxin-type domain occupies 35-127 (GDVTIQINGE…DMQIRVPEEV (93 aa)). Residues C70, C76, C79, and C111 each coordinate [2Fe-2S] cluster. The FAD-binding FR-type domain occupies 130-269 (VKKWECTVES…YGPFGEFFAK (140 aa)).

Belongs to the NqrF family. In terms of assembly, composed of six subunits; NqrA, NqrB, NqrC, NqrD, NqrE and NqrF. The cofactor is [2Fe-2S] cluster. FAD is required as a cofactor.

It localises to the cell inner membrane. It carries out the reaction a ubiquinone + n Na(+)(in) + NADH + H(+) = a ubiquinol + n Na(+)(out) + NAD(+). Its function is as follows. NQR complex catalyzes the reduction of ubiquinone-1 to ubiquinol by two successive reactions, coupled with the transport of Na(+) ions from the cytoplasm to the periplasm. The first step is catalyzed by NqrF, which accepts electrons from NADH and reduces ubiquinone-1 to ubisemiquinone by a one-electron transfer pathway. The protein is Na(+)-translocating NADH-quinone reductase subunit F of Pseudomonas paraeruginosa (strain DSM 24068 / PA7) (Pseudomonas aeruginosa (strain PA7)).